A 427-amino-acid polypeptide reads, in one-letter code: U1 small nuclear ribonucleoprotein 70 kDa (427 aa).

2 disordered regions span residues 82–102 and 215–427; these read EPGD…SQKR and RGRT…EYVR. Residues 93–102 are compositionally biased toward basic and acidic residues; it reads PEVELPSQKR. In terms of domain architecture, RRM spans 138-216; sequence KTLFVSRLNY…RRVLVDVERG (79 aa). Residues 227–241 are compositionally biased toward gly residues; that stretch reads LGGGLGTSRVGGGEE. 2 stretches are compositionally biased toward basic and acidic residues: residues 257–402 and 409–427; these read EPSR…RYDK and RYER…EYVR. At S282 the chain carries Phosphoserine.

As to quaternary structure, component of the spliceosome. Interacts with CYP63, U2AF35A, U2AF35B, SRZ21, RSZ22, SR34, SR45, SR45A and SCL33. Post-translationally, phosphorylated. The association and dissociation with SR45 is not affected by the phosphorylation status. Ubiquitous.

The protein resides in the nucleus speckle. Its subcellular location is the nucleus. It localises to the nucleoplasm. In terms of biological role, mediates the splicing of pre-mRNA by binding to the loop I region of U1-snRNA. The polypeptide is U1 small nuclear ribonucleoprotein 70 kDa (RNU1) (Arabidopsis thaliana (Mouse-ear cress)).